The primary structure comprises 515 residues: 1-pyrroline-5-carboxylate dehydrogenase (515 aa).

Residues E286 and C320 contribute to the active site.

Belongs to the aldehyde dehydrogenase family. RocA subfamily.

It catalyses the reaction L-glutamate 5-semialdehyde + NAD(+) + H2O = L-glutamate + NADH + 2 H(+). The protein operates within amino-acid degradation; L-proline degradation into L-glutamate; L-glutamate from L-proline: step 2/2. This chain is 1-pyrroline-5-carboxylate dehydrogenase, found in Geobacillus kaustophilus (strain HTA426).